We begin with the raw amino-acid sequence, 172 residues long: Adenine phosphoribosyltransferase (172 aa).

The protein belongs to the purine/pyrimidine phosphoribosyltransferase family. As to quaternary structure, homodimer.

It is found in the cytoplasm. The enzyme catalyses AMP + diphosphate = 5-phospho-alpha-D-ribose 1-diphosphate + adenine. It functions in the pathway purine metabolism; AMP biosynthesis via salvage pathway; AMP from adenine: step 1/1. In terms of biological role, catalyzes a salvage reaction resulting in the formation of AMP, that is energically less costly than de novo synthesis. In Prochlorococcus marinus (strain MIT 9215), this protein is Adenine phosphoribosyltransferase.